A 101-amino-acid chain; its full sequence is Small ribosomal subunit protein uS14 (101 aa).

It belongs to the universal ribosomal protein uS14 family. As to quaternary structure, part of the 30S ribosomal subunit. Contacts proteins S3 and S10.

In terms of biological role, binds 16S rRNA, required for the assembly of 30S particles and may also be responsible for determining the conformation of the 16S rRNA at the A site. This is Small ribosomal subunit protein uS14 from Methylibium petroleiphilum (strain ATCC BAA-1232 / LMG 22953 / PM1).